The sequence spans 396 residues: Elongation factor Tu (396 aa).

The 197-residue stretch at Lys10–Glu206 folds into the tr-type G domain. Residues Gly19–Thr26 form a G1 region. Gly19–Thr26 is a GTP binding site. Residue Thr26 participates in Mg(2+) binding. Residues Gly60–Ser64 form a G2 region. The G3 stretch occupies residues Asp81–Gly84. GTP contacts are provided by residues Asp81–His85 and Asn136–Asp139. A G4 region spans residues Asn136 to Asp139. Residues Ser174–Leu176 form a G5 region.

This sequence belongs to the TRAFAC class translation factor GTPase superfamily. Classic translation factor GTPase family. EF-Tu/EF-1A subfamily. In terms of assembly, monomer.

It localises to the cytoplasm. It catalyses the reaction GTP + H2O = GDP + phosphate + H(+). Its function is as follows. GTP hydrolase that promotes the GTP-dependent binding of aminoacyl-tRNA to the A-site of ribosomes during protein biosynthesis. The sequence is that of Elongation factor Tu from Rhodopseudomonas palustris (strain HaA2).